The sequence spans 349 residues: Putative nuclease HARBI1 (349 aa).

One can recognise a DDE Tnp4 domain in the interval 148–300 (VDCMHVAIKA…IILACCVLHN (153 aa)). Positions 149, 199, 225, and 261 each coordinate a divalent metal cation.

The protein belongs to the HARBI1 family. As to quaternary structure, interacts with NAIF1. Requires a divalent metal cation as cofactor. In terms of tissue distribution, detected in brain.

It localises to the nucleus. The protein localises to the cytoplasm. Transposase-derived protein that may have nuclease activity (Potential). Does not have transposase activity. The polypeptide is Putative nuclease HARBI1 (HARBI1) (Bos taurus (Bovine)).